Here is a 398-residue protein sequence, read N- to C-terminus: Probable pectate lyase P56 (398 aa).

Residues Met-1–Ala-27 form the signal peptide. Asn-135 is a glycosylation site (N-linked (GlcNAc...) asparagine). Residues Asp-192, Asp-217, and Asp-221 each contribute to the Ca(2+) site. N-linked (GlcNAc...) asparagine glycosylation occurs at Asn-228. Arg-273 is an active-site residue.

Belongs to the polysaccharide lyase 1 family. Ca(2+) serves as cofactor. As to expression, expressed in anthers and pollen.

It carries out the reaction Eliminative cleavage of (1-&gt;4)-alpha-D-galacturonan to give oligosaccharides with 4-deoxy-alpha-D-galact-4-enuronosyl groups at their non-reducing ends.. It participates in glycan metabolism; pectin degradation; 2-dehydro-3-deoxy-D-gluconate from pectin: step 2/5. Functionally, might be needed during pollen development and tube growth. The sequence is that of Probable pectate lyase P56 (LAT56) from Solanum lycopersicum (Tomato).